The following is a 79-amino-acid chain: Darcynin (79 aa).

This sequence belongs to the darcynin family.

The chain is Darcynin from Chromobacterium violaceum (strain ATCC 12472 / DSM 30191 / JCM 1249 / CCUG 213 / NBRC 12614 / NCIMB 9131 / NCTC 9757 / MK).